The chain runs to 564 residues: Septation ring formation regulator EzrA (564 aa).

At 1–2 (MV) the chain is on the extracellular side. The helical transmembrane segment at 3–21 (FVISVILAIIVILTIGLIL) threads the bilayer. Residues 22 to 564 (RKRIYDKVDH…IEENQLTLNR (543 aa)) are Cytoplasmic-facing. Coiled coils occupy residues 101 to 140 (ANNILTEGDQKLQNIEVKIEEILEELDELLSSEKTSREEV), 168 to 215 (FDKK…MEQF), 251 to 436 (GFDK…KKSN), and 468 to 537 (DIAK…ELSL).

Belongs to the EzrA family.

Its subcellular location is the cell membrane. Negative regulator of FtsZ ring formation; modulates the frequency and position of FtsZ ring formation. Inhibits FtsZ ring formation at polar sites. Interacts either with FtsZ or with one of its binding partners to promote depolymerization. The chain is Septation ring formation regulator EzrA from Oceanobacillus iheyensis (strain DSM 14371 / CIP 107618 / JCM 11309 / KCTC 3954 / HTE831).